A 960-amino-acid chain; its full sequence is Leucine--tRNA ligase (960 aa).

The 'HIGH' region signature appears at 71 to 82 (PYPSGAGLHVGH). A 'KMSKS' region motif is present at residues 729 to 733 (KMGKS). An ATP-binding site is contributed by lysine 732.

The protein belongs to the class-I aminoacyl-tRNA synthetase family.

It is found in the cytoplasm. It carries out the reaction tRNA(Leu) + L-leucine + ATP = L-leucyl-tRNA(Leu) + AMP + diphosphate. The sequence is that of Leucine--tRNA ligase from Corynebacterium diphtheriae (strain ATCC 700971 / NCTC 13129 / Biotype gravis).